The chain runs to 67 residues: Large ribosomal subunit protein uL29 (67 aa).

This sequence belongs to the universal ribosomal protein uL29 family.

This Alkaliphilus oremlandii (strain OhILAs) (Clostridium oremlandii (strain OhILAs)) protein is Large ribosomal subunit protein uL29.